Here is a 61-residue protein sequence, read N- to C-terminus: ATP synthase subunit J, mitochondrial (61 aa).

Residues 13–32 (LVKYYWPFFVGFGLTFYGVA) form a helical membrane-spanning segment.

As to quaternary structure, F-type ATP synthases have 2 components, the catalytic core F(1) and the membrane-embedded component F(0), linked together by a central stalk and a peripheral stalk. The central stalk, also called rotor shaft, is often seen as part of F(1). The peripheral stalk is seen as part of F(0). F(0) contains the membrane channel next to the rotor. F-type ATP synthases form dimers but each monomer functions independently in ATP generation. The dimer consists of 18 different polypeptides: ATP1 (subunit alpha, part of F(1), 3 molecules per monomer), ATP2 (subunit beta, part of F(1), 3 molecules per monomer), ATP3 (subunit gamma, part of the central stalk), ATP4 (subunit b, part of the peripheral stalk), ATP5/OSCP (subunit 5/OSCP, part of the peripheral stalk), ATP6 (subunit a, part of the peripheral stalk), ATP7 (subunit d, part of the peripheral stalk), ATP8 (subunit 8, part of the peripheral stalk), OLI1 (subunit c, part of the rotor, 10 molecules per monomer), ATP14 (subunit h, part of the peripheral stalk), ATP15 (subunit epsilon, part of the central stalk), ATP16 (subunit delta, part of the central stalk), ATP17 (subunit f, part of the peripheral stalk), ATP18 (subunit i/j, part of the peripheral stalk). Dimer-specific subunits are ATP19 (subunit k, at interface between monomers), ATP20 (subunit g, at interface between monomers), TIM11 (subunit e, at interface between monomers). Also contains subunit L.

The protein resides in the mitochondrion inner membrane. Mitochondrial membrane ATP synthase (F(1)F(0) ATP synthase or Complex V) produces ATP from ADP in the presence of a proton gradient across the membrane which is generated by electron transport complexes of the respiratory chain. F-type ATP synthases consist of two structural domains, F(1) - containing the extramembraneous catalytic core, and F(0) - containing the membrane proton channel, linked together by a central stalk and a peripheral stalk. During catalysis, ATP synthesis in the catalytic domain of F(1) is coupled via a rotary mechanism of the central stalk subunits to proton translocation. Part of the complex F(0) domain. Minor subunit located with subunit a/ATP6 in the membrane. The chain is ATP synthase subunit J, mitochondrial from Pichia angusta (Yeast).